The sequence spans 209 residues: Aspartate kinase-like protein lolA1 (209 aa).

The segment covering 1–11 has biased composition (basic and acidic residues); sequence MLDESPMRKGD. The disordered stretch occupies residues 1-27; the sequence is MLDESPMRKGDSVSNDQSNPESNASVS. Polar residues predominate over residues 12–27; the sequence is SVSNDQSNPESNASVS.

It belongs to the aspartokinase family.

The protein operates within alkaloid biosynthesis. Its function is as follows. Aspartokinase-like protein; part of the gene cluster that mediates the biosynthesis of loline alkaloids, potent insecticidal agents composed of a pyrrolizidine ring system and an uncommon ether bridge linking carbons 2 and 7. Lolines are structurally differentiated by the various modifications of the L-amino group and include norloline, loline, N-methylloline, N-acetylloline, N-acetylnorloline, and N-formylloline. The first committed step is the condensation of O-acetyl-L-homoserine (derived from L-aspartic acid) and L-proline, probably catalyzed by the gamma-type pyridoxal 5'-phosphate(PLP)-dependent enzyme lolC, to give the diamino diacid, NACPP. Ensuing cyclization, decarboxylation, and acetylation steps yield 1-exo-acetamidopyrrolizidine (AcAP). LolO is required for installation of the ether bridge upon the pathway intermediate, 1-exo-acetamidopyrrolizidine (AcAP). In sequential 2-oxoglutarate- and O(2)-consuming steps, lolO removes hydrogens from C2 and C7 of AcAP to form both carbon-oxygen bonds in N-acetylnorloline (NANL), the precursor to all other lolines. The enzymes lolD, lolE, lolF and lolT have also been proposed to be involved in the ether-bridge installation. Further processing of the exocyclic moiety of NANL by fungal N-acetamidase (LolN), methyltransferase (LolM), and cytochrome P450 (LolP) enzymes, with occasional involvement of a plant acetyltransferase, generates the other known lolines. LolN transforms NANL to norlonine which is monomethylated and dimethylated to respectively lonine and N-methyllonine (NML) by lolM. LolP catalyzes hydroxylation of the methyl group in N-methylloline (NML) and further oxygenation to N-formylloline (NFL). A plant acetyltransferase is responsible for the acetylation of loline to form N-acetylloline (NAL). LolA might interact with aspartate kinase to prevent feedback inhibition of its activity by these end products and thereby promote production of L-homoserine from L-aspartate. The sequence is that of Aspartate kinase-like protein lolA1 from Epichloe uncinata (Endophyte fungus).